We begin with the raw amino-acid sequence, 98 residues long: Large ribosomal subunit protein uL23 (98 aa).

This sequence belongs to the universal ribosomal protein uL23 family. As to quaternary structure, part of the 50S ribosomal subunit. Contacts protein L29, and trigger factor when it is bound to the ribosome.

Functionally, one of the early assembly proteins it binds 23S rRNA. One of the proteins that surrounds the polypeptide exit tunnel on the outside of the ribosome. Forms the main docking site for trigger factor binding to the ribosome. The sequence is that of Large ribosomal subunit protein uL23 from Halorhodospira halophila (strain DSM 244 / SL1) (Ectothiorhodospira halophila (strain DSM 244 / SL1)).